A 349-amino-acid chain; its full sequence is Hydroxymethylglutaryl-CoA synthase (349 aa).

(3S)-3-hydroxy-3-methylglutaryl-CoA contacts are provided by Asp-29 and Ala-30. Glu-81 acts as the Proton donor/acceptor in catalysis. (3S)-3-hydroxy-3-methylglutaryl-CoA-binding residues include Cys-113 and Thr-154. Catalysis depends on Cys-113, which acts as the Acyl-thioester intermediate. A CoA-binding site is contributed by Arg-202. The (3S)-3-hydroxy-3-methylglutaryl-CoA site is built by Thr-204 and His-237. The Proton donor/acceptor role is filled by His-237. Position 242 (Lys-242) interacts with CoA. Residues Lys-246, Asn-269, and Ser-299 each contribute to the (3S)-3-hydroxy-3-methylglutaryl-CoA site.

The protein belongs to the thiolase-like superfamily. Archaeal HMG-CoA synthase family. In terms of assembly, interacts with acetoacetyl-CoA thiolase that catalyzes the precedent step in the pathway and with a DUF35 protein. The acetoacetyl-CoA thiolase/HMG-CoA synthase complex channels the intermediate via a fused CoA-binding site, which allows for efficient coupling of the endergonic thiolase reaction with the exergonic HMGCS reaction.

It catalyses the reaction acetoacetyl-CoA + acetyl-CoA + H2O = (3S)-3-hydroxy-3-methylglutaryl-CoA + CoA + H(+). It functions in the pathway metabolic intermediate biosynthesis; (R)-mevalonate biosynthesis; (R)-mevalonate from acetyl-CoA: step 2/3. Its function is as follows. Catalyzes the condensation of acetyl-CoA with acetoacetyl-CoA to form 3-hydroxy-3-methylglutaryl-CoA (HMG-CoA). Functions in the mevalonate (MVA) pathway leading to isopentenyl diphosphate (IPP), a key precursor for the biosynthesis of isoprenoid compounds that are building blocks of archaeal membrane lipids. The polypeptide is Hydroxymethylglutaryl-CoA synthase (Methanosarcina barkeri (strain Fusaro / DSM 804)).